The sequence spans 657 residues: LIM and SH3 domain protein Lasp (657 aa).

Residues 3–63 (KTCARCQKVV…EAHIPKAKAT (61 aa)) enclose the LIM zinc-binding domain. Nebulin repeat units follow at residues 64–95 (AIAD…KAKG) and 96–130 (KFTQ…KKAA). Disordered regions lie at residues 130-151 (AMEK…EYFS), 164-223 (PTAS…PIQH), 235-257 (YQQL…QLHD), 294-318 (LYPT…QQQA), 332-415 (NSHH…SAAS), and 460-528 (KQHA…PKRI). The span at 140–150 (VSDSSNESEYF) shows a compositional bias: polar residues. 2 stretches are compositionally biased toward low complexity: residues 172–215 (AATT…QQQT) and 236–254 (QQLQ…QQQQ). Polar residues predominate over residues 332–341 (NSHHPSGNSV). A compositionally biased stretch (low complexity) spans 342–357 (DQYDQPQQQQHQPQQQ). Polar residues predominate over residues 358-370 (STNPTLVAAQQQQ). Residues 371–403 (SHHSLLNNNASNGGISHSHHSNINNNGHGSQNQ) show a composition bias toward low complexity. The segment covering 460 to 475 (KQHASNGHMPNQQQQH) has biased composition (polar residues). S505 and S530 each carry phosphoserine. A disordered region spans residues 548–592 (EQAHQQQKHQQYYQQVQMMQQQEHPPQQQQMRQQPSYSSLQEKQS). The span at 549 to 586 (QAHQQQKHQQYYQQVQMMQQQEHPPQQQQMRQQPSYSS) shows a compositional bias: low complexity. One can recognise an SH3 domain in the interval 596–657 (TAMRVYRAIY…PANYVEQAVI (62 aa)).

As to quaternary structure, interacts with osk.

The chain is LIM and SH3 domain protein Lasp from Drosophila melanogaster (Fruit fly).